We begin with the raw amino-acid sequence, 113 residues long: U11-theraphotoxin-Hhn1a (113 aa).

The first 21 residues, 1 to 21 (MNTVRVTFLLVFVLAVSLGQA), serve as a signal peptide directing secretion. A propeptide spanning residues 22–74 (DKDENRMEMQEKTEQGNSYLDFAENLPLQKLEELEAKLLEEDSEESRNSRQKR) is cleaved from the precursor. The segment covering 60–69 (LEEDSEESRN) has biased composition (basic and acidic residues). Residues 60–83 (LEEDSEESRNSRQKRCIGEGVPCD) form a disordered region. 3 cysteine pairs are disulfide-bonded: cysteine 75-cysteine 90, cysteine 82-cysteine 95, and cysteine 89-cysteine 110.

This sequence belongs to the neurotoxin 14 (magi-1) family. 01 (HNTX-16) subfamily. Expressed by the venom gland.

Its subcellular location is the secreted. Functionally, probable ion channel inhibitor. The sequence is that of U11-theraphotoxin-Hhn1a from Cyriopagopus hainanus (Chinese bird spider).